Consider the following 66-residue polypeptide: Large ribosomal subunit protein uL29 (66 aa).

Belongs to the universal ribosomal protein uL29 family. Part of the 50S ribosomal subunit.

In Thermococcus kodakarensis (strain ATCC BAA-918 / JCM 12380 / KOD1) (Pyrococcus kodakaraensis (strain KOD1)), this protein is Large ribosomal subunit protein uL29.